The following is a 132-amino-acid chain: Small ribosomal subunit protein uS19 (132 aa).

The protein belongs to the universal ribosomal protein uS19 family.

In terms of biological role, protein S19 forms a complex with S13 that binds strongly to the 16S ribosomal RNA. In Korarchaeum cryptofilum (strain OPF8), this protein is Small ribosomal subunit protein uS19.